A 257-amino-acid polypeptide reads, in one-letter code: MSGKNRLNIFPTRMALTVMKTKLKGAVTGHSLLKKKSDALTIRFRRILANIVENKQLMGTTMRDASFSLAAAKYAAGEFSNSVIENVSNPTIAVKMTTENVAGVHLPTFEKISEGVVSNSQELTGLSKGGQQINKSRESHIKAVEALIALASLQTAFITLDEVIKITNRRVNAIEYVVKPKLENTISYIITELDESEREEFYRLKKVQGKKKKDLKAKEAQKEENSANKTIMEPASVHKVRSLIDDEPEDAELLYED.

The tract at residues 211–233 (KKKDLKAKEAQKEENSANKTIME) is disordered. Positions 216–226 (KAKEAQKEENS) are enriched in basic and acidic residues.

The protein belongs to the V-ATPase D subunit family. V-ATPase is a heteromultimeric enzyme composed of a peripheral catalytic V1 complex (components A to H) attached to an integral membrane V0 proton pore complex (components: a, c, c', c'' and d).

Functionally, subunit of the peripheral V1 complex of vacuolar ATPase. Vacuolar ATPase is responsible for acidifying a variety of intracellular compartments in eukaryotic cells, thus providing most of the energy required for transport processes in the vacuolar system. The protein is V-type proton ATPase subunit D (atp6v1d) of Dictyostelium discoideum (Social amoeba).